Here is a 282-residue protein sequence, read N- to C-terminus: Pantothenate synthetase (282 aa).

Residue 26–33 (MGNLHDGH) participates in ATP binding. His33 functions as the Proton donor in the catalytic mechanism. Residue Gln57 coordinates (R)-pantoate. Gln57 contributes to the beta-alanine binding site. 148–151 (GKKD) contacts ATP. Gln154 is a (R)-pantoate binding site. 185 to 188 (LSSR) is a binding site for ATP.

This sequence belongs to the pantothenate synthetase family. As to quaternary structure, homodimer.

The protein localises to the cytoplasm. It carries out the reaction (R)-pantoate + beta-alanine + ATP = (R)-pantothenate + AMP + diphosphate + H(+). It participates in cofactor biosynthesis; (R)-pantothenate biosynthesis; (R)-pantothenate from (R)-pantoate and beta-alanine: step 1/1. Catalyzes the condensation of pantoate with beta-alanine in an ATP-dependent reaction via a pantoyl-adenylate intermediate. This chain is Pantothenate synthetase, found in Polaromonas sp. (strain JS666 / ATCC BAA-500).